We begin with the raw amino-acid sequence, 121 residues long: Small ribosomal subunit protein uS11 (121 aa).

This sequence belongs to the universal ribosomal protein uS11 family. As to quaternary structure, part of the 30S ribosomal subunit. Interacts with proteins S7 and S18. Binds to IF-3.

In terms of biological role, located on the platform of the 30S subunit, it bridges several disparate RNA helices of the 16S rRNA. Forms part of the Shine-Dalgarno cleft in the 70S ribosome. The polypeptide is Small ribosomal subunit protein uS11 (Mycoplasma genitalium (strain ATCC 33530 / DSM 19775 / NCTC 10195 / G37) (Mycoplasmoides genitalium)).